The chain runs to 82 residues: Large ribosomal subunit protein bL27 (82 aa).

Positions 1-54 (MAHKKGQGASRNGRDSESKRLGMKVGAGQRVSTGSILVRQRGTKWHPSQNVGRG) are disordered.

It belongs to the bacterial ribosomal protein bL27 family.

This is Large ribosomal subunit protein bL27 from Chlamydia caviae (strain ATCC VR-813 / DSM 19441 / 03DC25 / GPIC) (Chlamydophila caviae).